A 319-amino-acid polypeptide reads, in one-letter code: Annexin A4 (319 aa).

Residue alanine 2 is modified to N-acetylalanine. Threonine 7 carries the phosphothreonine modification. Serine 12 carries the post-translational modification Phosphoserine. Annexin repeat units lie at residues 14–85 (FNAM…GMMT), 86–157 (PTVL…SLSA), 169–241 (ALVR…AIVK), and 245–316 (NKSA…VLCG). An N6-acetyllysine mark is found at lysine 213, lysine 293, and lysine 300.

Belongs to the annexin family.

It localises to the zymogen granule membrane. Functionally, calcium/phospholipid-binding protein which promotes membrane fusion and is involved in exocytosis. This chain is Annexin A4, found in Homo sapiens (Human).